The primary structure comprises 513 residues: ATP synthase subunit alpha (513 aa).

ATP is bound at residue 169-176 (GDRQTGKT).

Belongs to the ATPase alpha/beta chains family. In terms of assembly, F-type ATPases have 2 components, CF(1) - the catalytic core - and CF(0) - the membrane proton channel. CF(1) has five subunits: alpha(3), beta(3), gamma(1), delta(1), epsilon(1). CF(0) has three main subunits: a(1), b(2) and c(9-12). The alpha and beta chains form an alternating ring which encloses part of the gamma chain. CF(1) is attached to CF(0) by a central stalk formed by the gamma and epsilon chains, while a peripheral stalk is formed by the delta and b chains.

The protein localises to the cell inner membrane. The enzyme catalyses ATP + H2O + 4 H(+)(in) = ADP + phosphate + 5 H(+)(out). Produces ATP from ADP in the presence of a proton gradient across the membrane. The alpha chain is a regulatory subunit. The polypeptide is ATP synthase subunit alpha (Tolumonas auensis (strain DSM 9187 / NBRC 110442 / TA 4)).